We begin with the raw amino-acid sequence, 35 residues long: Pheromone-binding protein 2 (35 aa).

Belongs to the PBP/GOBP family. Homodimer. In terms of tissue distribution, antenna.

Functionally, this major soluble protein in olfactory sensilla of male moths might serve to solubilize the extremely hydrophobic pheromone molecules and to transport pheromone through the aqueous lymph to receptors located on olfactory cilia. The sequence is that of Pheromone-binding protein 2 from Lymantria dispar (Gypsy moth).